We begin with the raw amino-acid sequence, 367 residues long: Glutamate 5-kinase (367 aa).

An ATP-binding site is contributed by lysine 9. 3 residues coordinate substrate: serine 49, aspartate 136, and asparagine 148. Residues 168–169 and 210–216 each bind ATP; these read TD and TGGMKSK. Residues 276 to 350 enclose the PUA domain; sequence SGQIEIDAGA…GMQSQQIQAR (75 aa).

It belongs to the glutamate 5-kinase family.

Its subcellular location is the cytoplasm. The catalysed reaction is L-glutamate + ATP = L-glutamyl 5-phosphate + ADP. The protein operates within amino-acid biosynthesis; L-proline biosynthesis; L-glutamate 5-semialdehyde from L-glutamate: step 1/2. Catalyzes the transfer of a phosphate group to glutamate to form L-glutamate 5-phosphate. The polypeptide is Glutamate 5-kinase (Bacillus anthracis).